The sequence spans 143 residues: Ribosome maturation factor RimP (143 aa).

Belongs to the RimP family.

It localises to the cytoplasm. Its function is as follows. Required for maturation of 30S ribosomal subunits. The polypeptide is Ribosome maturation factor RimP (Borrelia turicatae (strain 91E135)).